Reading from the N-terminus, the 61-residue chain is MPFVKIDLFEGRSEEQKIELAREVTEVVSRVAKAPKEAIHVFINDMPEGTYYPHGEMKKKN.

Pro-2 acts as the Proton acceptor; via imino nitrogen in catalysis.

It belongs to the 4-oxalocrotonate tautomerase family.

This chain is Probable tautomerase stu1128, found in Streptococcus thermophilus (strain ATCC BAA-250 / LMG 18311).